A 356-amino-acid chain; its full sequence is Septin-2A (356 aa).

The 273-residue stretch at 33–305 (KGFEFTLMVV…ENFRSERLKK (273 aa)) folds into the Septin-type G domain. A G1 motif region spans residues 43–50 (GESGLGKS). GTP-binding positions include 43–50 (GESGLGKS), T77, G103, 182–190 (KADTLTLRE), G240, and R255. Residues 100–103 (DTPG) form a G3 motif region. Positions 181–184 (AKAD) are G4 motif. The segment at 259-269 (WGVVEVENTEH) is important for dimerization.

The protein belongs to the TRAFAC class TrmE-Era-EngA-EngB-Septin-like GTPase superfamily. Septin GTPase family. In terms of assembly, septins polymerize into heterooligomeric protein complexes that form filaments, and associate with cellular membranes, actin filaments and microtubules. GTPase activity is required for filament formation. Can form heterooligomers with other family members and form filaments. Interacts with wdpcp.

The protein localises to the cytoplasm. Its subcellular location is the cytoskeleton. The protein resides in the spindle. It localises to the cleavage furrow. It is found in the midbody. The protein localises to the cell projection. Its subcellular location is the cilium membrane. Filament-forming cytoskeletal GTPase. Required for normal organization of the actin cytoskeleton. Plays a role in the biogenesis of polarized columnar-shaped epithelium. Required for the progression through mitosis through regulation of chromosome congression. During anaphase, may be required for chromosome segregation and spindle elongation. Probably plays a role in ciliogenesis and collective cell movements including convergent extension during gastrulation. In cilia, required for the integrity of the diffusion barrier at the base of the primary cilium that prevents diffusion of transmembrane proteins between the cilia and plasma membranes. Controls cell shape and not polarization of cells during convergent extension. The polypeptide is Septin-2A (sept2-a) (Xenopus laevis (African clawed frog)).